Here is a 1080-residue protein sequence, read N- to C-terminus: Headcase protein (1080 aa).

Disordered stretches follow at residues 1-27 (MAPRRNSNISSSGNSTQQQHQQQLQQQ), 181-277 (IYLN…GNNG), 310-335 (SLSSSGAGSGSTSPSDSQSSGEISVS), 655-693 (PLESPVGTGATTTQVPNAQGSPTASGCSSNTIASKQPPK), 798-826 (SKYQQQQHQQQQQQRQQQHNLQPQQQHAT), 891-916 (SGCSSGSGSQPSLSPTASSNGNDGSK), and 940-974 (QRQQPPQQQVPQQQPHAASPTASLTSSSSSSNGWS). Positions 181–197 (IYLNGSGNRPTLANGSL) are enriched in polar residues. Gly residues predominate over residues 218–228 (NGGGGGGGAGV). A compositionally biased stretch (polar residues) spans 232–251 (TKTPLSNNNGNSYAGLTPNP). Over residues 263-277 (NNGNTASNGSSGNNG) the composition is skewed to low complexity. Over residues 663 to 688 (GATTTQVPNAQGSPTASGCSSNTIAS) the composition is skewed to polar residues. The segment covering 801 to 826 (QQQQHQQQQQQRQQQHNLQPQQQHAT) has biased composition (low complexity). The span at 900–913 (QPSLSPTASSNGND) shows a compositional bias: polar residues. Residues 941 to 974 (RQQPPQQQVPQQQPHAASPTASLTSSSSSSNGWS) are compositionally biased toward low complexity.

As to expression, expressed in all imaginal cells of the embryo and larvae. Expressed in a subset of tracheal fusion cells from stage 14 to the end of embryogenesis in metameres 2-9, lateral trunk and ventral anastomoses.

Its subcellular location is the cytoplasm. In terms of biological role, required for imaginal cell differentiation, may be involved in hormonal responsiveness during metamorphosis. Involved in an inhibitory signaling mechanism to determine the number of cells that will form unicellular sprouts in the trachea. Regulated by transcription factor esg. The longer hdc protein is completely functional and the shorter protein carries some function. This Drosophila melanogaster (Fruit fly) protein is Headcase protein.